The chain runs to 480 residues: MAAGAIPMAYQTTPSSPDWLNKGDNAWQMTSATLVGLQSMPGLVILYGSIVKKKWAINSAFMALYAFAAVWICWVVWAYNMSFGDRLLPFWGKARPALGQSFLVAQSELTATAIRYHNGSAEAPMLKPLYPVATMVYFQCMFASITIIILAGSLLGRMNIKAWMAFVPLWITFSYTVCAFSLWGGGFLFQWGVIDYSGGYVIHLSSGIAGLTAAYWVGPRSASDRERFPPNNILLVLAGAGLLWLGWTGFNGGDPYSANIDSSMAVLNTHICASTSLLVWTILDVFFFGKPSVIGAVQGMITGLVCITPGAGLVQGWAAIVMGILSGSIPWYTMMVLHKKWSFMQRIDDTLGVFHTHAVAGFLGGATTGLFAEPILCSLFLSIPDSKGAFYGGPGGSQFGKQIAGALFVTAWNIVITSIICVIISLILPLRIADQELLIGDDAVHGEEAYAIWAEGELNDMTHHNESTHSGVSVGVTQNV.

11 helical membrane passes run serine 31–valine 51, serine 59–tyrosine 79, methionine 135–leucine 155, leucine 169–phenylalanine 189, glycine 198–glycine 218, isoleucine 233–glycine 253, alanine 265–phenylalanine 287, serine 292–valine 314, alanine 318–leucine 337, glycine 361–leucine 381, and leucine 407–isoleucine 427.

This sequence belongs to the ammonia transporter channel (TC 1.A.11.2) family.

It is found in the membrane. In terms of biological role, involved in ammonium transport. The polypeptide is Ammonium transporter 3 member 3 (AMT3-3) (Oryza sativa subsp. japonica (Rice)).